The primary structure comprises 89 residues: MVRKILIDFTKHITKSSLERHPHPAASFPLPASFTTVDSGPAKHSTAPPATPETSILVEDRNELPLRFHRLPVSEAEMQAVESGGAYAF.

The protein belongs to the alpha-ketoglutarate dehydrogenase component 4 family. In terms of assembly, component of the 2-oxoglutarate dehydrogenase complex (OGDC), also called alpha-ketoglutarate dehydrogenase (KGDH) complex. The copmplex is composed of the catalytic subunits OGDH (2-oxoglutarate dehydrogenase kgd1; also called E1 subunit), DLST (dihydrolipoamide succinyltransferase kgd2; also called E2 subunit) and DLD (dihydrolipoamide dehydrogenase dld1; also called E3 subunit), and the assembly factor KGD4. Within OGDC, interacts (via N-terminus) with E3 subunit and (via C-terminus) with the complex core formed by E1 and E2 subunits.

Its subcellular location is the mitochondrion. Functionally, molecular adapter that is necessary to a form a stable 2-oxoglutarate dehydrogenase enzyme complex (OGDC). Required for incorporation of the E3 subunit (dld1) into the E1-E2 core (kgd1-kgd2) of mitochondrial OGDC, and acting as a stability factor for the fully assembled complex. This is Alpha-ketoglutarate dehydrogenase subunit 4, mitochondrial (kgd4) from Schizosaccharomyces pombe (strain 972 / ATCC 24843) (Fission yeast).